The following is a 317-amino-acid chain: SURF1-like protein (317 aa).

Helical transmembrane passes span 78–98 (GSILMLGLPAFAFSLGVWQIY) and 293–313 (HMNYLTTWFTLTLVTMLMWIH).

This sequence belongs to the SURF1 family.

It localises to the mitochondrion inner membrane. Its function is as follows. Probably involved in the biogenesis of the COX complex. This chain is SURF1-like protein (sft-1), found in Caenorhabditis briggsae.